Reading from the N-terminus, the 269-residue chain is Proline-rich protein 7 (269 aa).

Residues 1–9 (MVMSQGTYT) are Extracellular-facing. A required for interaction with NMDA receptors region spans residues 1-44 (MVMSQGTYTFLTCFAGFWLIWGLIVLLCCFCSFLRRRLKRRQEE). Positions 2-39 (VMSQGTYTFLTCFAGFWLIWGLIVLLCCFCSFLRRRLK) are required for membrane localization. A helical; Signal-anchor for type III membrane protein membrane pass occupies residues 10–30 (FLTCFAGFWLIWGLIVLLCCF). The Cytoplasmic portion of the chain corresponds to 31–269 (CSFLRRRLKR…IPLFGRTTAV (239 aa)). Disordered regions lie at residues 63–83 (GSLA…RSRL) and 97–121 (PLLH…PHPP). At Ser-64 the chain carries Phosphoserine. Basic residues predominate over residues 108–117 (AHPHPHHHAL). A required for internalization region spans residues 146–166 (PCYEEAVLMAEPPPPYSEVLT). A required for apoptosis induction region spans residues 146–269 (PCYEEAVLMA…IPLFGRTTAV (124 aa)). Positions 267 to 269 (TAV) match the PDZ-binding motif.

In terms of assembly, forms a complex with NMDA receptor zeta subunit GRIN1 and epsilon subunit GRIN2B. Interacts with GRIN2B. Interacts with GRIN1; the interaction is reduced upon NMDA receptor activity. Found in a postsynaptic membrane complex with DLG4 and GRIN1. Interacts with DLG4 (via PDZ3 domain and to lesser degree via PDZ2 domain). Interacts with JUN. Found in a complex with JUN and FBXW7. Interacts with JUN and FBXW7; the interaction inhibits ubiquitination-mediated JUN degradation promoting its phosphorylation and transcriptional activity. Interacts with SRC. In terms of processing, palmitoylated. Tyrosine phosphorylated, possibly by SRC. Highly expressed in brain, moderately expressed in lymph nodes and T cells and low expression in thymus and spleen. Expressed in single positive progenitor thymocytes, particularly in CD8 single positive thymocytes.

The protein localises to the cell membrane. It is found in the postsynaptic cell membrane. Its subcellular location is the postsynaptic density membrane. It localises to the cytoplasm. The protein resides in the perinuclear region. The protein localises to the synapse. It is found in the cell projection. Its subcellular location is the dendrite. It localises to the nucleus. Functionally, acts as a synapse-to-nucleus messenger to promote NMDA receptor-mediated excitotoxicity in neurons in a JUN-dependent manner. Inhibits ubiquitination-mediated degradation and promotes phosphorylation and transcriptional activity of transcription factor JUN. Might play a redundant role in the regulation of T cell receptor signaling. Might promote apoptosis in T cells. This chain is Proline-rich protein 7 (Prr7), found in Mus musculus (Mouse).